The following is a 92-amino-acid chain: Small ribosomal subunit protein uS19 (92 aa).

Belongs to the universal ribosomal protein uS19 family.

Its function is as follows. Protein S19 forms a complex with S13 that binds strongly to the 16S ribosomal RNA. The polypeptide is Small ribosomal subunit protein uS19 (Albidiferax ferrireducens (strain ATCC BAA-621 / DSM 15236 / T118) (Rhodoferax ferrireducens)).